A 96-amino-acid polypeptide reads, in one-letter code: Large ribosomal subunit protein uL23 (96 aa).

The protein belongs to the universal ribosomal protein uL23 family. Part of the 50S ribosomal subunit. Contacts protein L29, and trigger factor when it is bound to the ribosome.

One of the early assembly proteins it binds 23S rRNA. One of the proteins that surrounds the polypeptide exit tunnel on the outside of the ribosome. Forms the main docking site for trigger factor binding to the ribosome. The polypeptide is Large ribosomal subunit protein uL23 (Clostridioides difficile (strain 630) (Peptoclostridium difficile)).